We begin with the raw amino-acid sequence, 273 residues long: NH(3)-dependent NAD(+) synthetase (273 aa).

Position 46–53 (46–53 (GISGGQDS)) interacts with ATP. Residue D52 participates in Mg(2+) binding. Residue R139 participates in deamido-NAD(+) binding. Residue T159 coordinates ATP. E164 contributes to the Mg(2+) binding site. Deamido-NAD(+) contacts are provided by K172 and D179. Positions 188 and 210 each coordinate ATP. 259 to 260 (HK) lines the deamido-NAD(+) pocket.

The protein belongs to the NAD synthetase family. In terms of assembly, homodimer.

It catalyses the reaction deamido-NAD(+) + NH4(+) + ATP = AMP + diphosphate + NAD(+) + H(+). It participates in cofactor biosynthesis; NAD(+) biosynthesis; NAD(+) from deamido-NAD(+) (ammonia route): step 1/1. Functionally, catalyzes the ATP-dependent amidation of deamido-NAD to form NAD. Uses ammonia as a nitrogen source. The protein is NH(3)-dependent NAD(+) synthetase of Streptococcus thermophilus (strain ATCC BAA-250 / LMG 18311).